Reading from the N-terminus, the 176-residue chain is NAD(P)H-quinone oxidoreductase subunit 6, chloroplastic (176 aa).

Transmembrane regions (helical) follow at residues 10-30, 32-52, 61-81, 92-112, and 152-172; these read FLLV…VLLP, PIYS…FYIL, AQLL…VMFM, LWTV…ISLI, and FFLP…GAIA.

Belongs to the complex I subunit 6 family. In terms of assembly, NDH is composed of at least 16 different subunits, 5 of which are encoded in the nucleus.

It localises to the plastid. The protein localises to the chloroplast thylakoid membrane. The catalysed reaction is a plastoquinone + NADH + (n+1) H(+)(in) = a plastoquinol + NAD(+) + n H(+)(out). The enzyme catalyses a plastoquinone + NADPH + (n+1) H(+)(in) = a plastoquinol + NADP(+) + n H(+)(out). Functionally, NDH shuttles electrons from NAD(P)H:plastoquinone, via FMN and iron-sulfur (Fe-S) centers, to quinones in the photosynthetic chain and possibly in a chloroplast respiratory chain. The immediate electron acceptor for the enzyme in this species is believed to be plastoquinone. Couples the redox reaction to proton translocation, and thus conserves the redox energy in a proton gradient. This is NAD(P)H-quinone oxidoreductase subunit 6, chloroplastic (ndhG) from Solanum tuberosum (Potato).